A 176-amino-acid chain; its full sequence is Large ribosomal subunit protein uL30 (176 aa).

The protein belongs to the universal ribosomal protein uL30 family. As to quaternary structure, part of the 50S ribosomal subunit.

This is Large ribosomal subunit protein uL30 from Pyrobaculum arsenaticum (strain DSM 13514 / JCM 11321 / PZ6).